We begin with the raw amino-acid sequence, 196 residues long: Rac-like GTP-binding protein RAC13 (196 aa).

A GTP-binding site is contributed by G13 to T20. The short motif at Y35–F43 is the Effector region element. GTP-binding positions include D60–Q64 and T118–D121. The residue at position 193 (C193) is a Cysteine methyl ester. C193 carries the S-geranylgeranyl cysteine lipid modification. The propeptide at A194–L196 is removed in mature form.

Belongs to the small GTPase superfamily. Rho family.

The protein localises to the cytoplasm. Its subcellular location is the membrane. Could participate in a signal transduction pathway that controls cytoskeletal organization. Functionally, inactive GDP-bound Rho GTPases reside in the cytosol, are found in a complex with Rho GDP-dissociation inhibitors (Rho GDIs), and are released from the GDI protein in order to translocate to membranes upon activation. The protein is Rac-like GTP-binding protein RAC13 (RAC13) of Gossypium hirsutum (Upland cotton).